Reading from the N-terminus, the 221-residue chain is Leucine rich adaptor protein 1-like (221 aa).

Met-1 is subject to N-acetylmethionine. A disordered region spans residues 1 to 81; the sequence is MEDGPLPDLR…SGSPRRSHPS (81 aa). Composition is skewed to basic and acidic residues over residues 8-21 and 28-39; these read DLRD…RKVP and LRGEEPAPREGA. Residues 48 to 75 are compositionally biased toward low complexity; it reads SCSSSSSCSSFAPSVSSSSSSSPASGSP.

The chain is Leucine rich adaptor protein 1-like (Lurap1l) from Rattus norvegicus (Rat).